Reading from the N-terminus, the 485-residue chain is NADH-quinone oxidoreductase subunit N (485 aa).

14 helical membrane passes run 8–28, 35–55, 71–91, 105–125, 127–147, 159–179, 203–223, 235–255, 271–291, 297–317, 326–346, 373–393, 408–430, and 455–475; these read LIAL…MLSI, FLNA…LWFV, GFAM…CTFA, FYLL…ANHL, ALFL…GYAF, YTIL…LVYA, LLAG…LVPF, PAPV…GVVM, VVLG…ALSQ, LLGY…IALQ, VGVY…VVSL, AAVM…LGFI, WWLV…RVAV, and IVVL…QPLI.

This sequence belongs to the complex I subunit 2 family. NDH-1 is composed of 13 different subunits. Subunits NuoA, H, J, K, L, M, N constitute the membrane sector of the complex.

It localises to the cell inner membrane. It carries out the reaction a quinone + NADH + 5 H(+)(in) = a quinol + NAD(+) + 4 H(+)(out). In terms of biological role, NDH-1 shuttles electrons from NADH, via FMN and iron-sulfur (Fe-S) centers, to quinones in the respiratory chain. The immediate electron acceptor for the enzyme in this species is believed to be ubiquinone. Couples the redox reaction to proton translocation (for every two electrons transferred, four hydrogen ions are translocated across the cytoplasmic membrane), and thus conserves the redox energy in a proton gradient. The protein is NADH-quinone oxidoreductase subunit N of Salmonella typhimurium (strain LT2 / SGSC1412 / ATCC 700720).